The sequence spans 345 residues: MKVAVLPGDGIGPEVTEAALKVLRALDEAEGLGLAYEVFPFGGAAIDAFGEPFPEPTRKGVEEAEAVLLGSVGGPKWDGLPRKIRPETGLLSLRKSQDLFANLRPAKVFPGLERLSPLKEEIARGVDVLIVRELTGGIYFGEPRGMSEAEAWNTERYSKPEVERVARVAFEAARKRRKHVVSVDKANVLEVGEFWRKTVEEVGRGYPDVALEHQYVDAMAMHLVRSPARFDVVVTGNIFGDILSDLASVLPGSLGLLPSASLGRGTPVFEPVHGSAPDIAGKGLANPTAAILSAAMMLEHAFGLVELARKVEDAVAKALLEAPPPDLGGSAGTEAFTATVLRHLA.

Residue 74–87 coordinates NAD(+); that stretch reads GPKWDGLPRKIRPE. Substrate-binding residues include arginine 94, arginine 104, arginine 132, and aspartate 217. Residues aspartate 217, aspartate 241, and aspartate 245 each contribute to the Mg(2+) site. NAD(+) is bound at residue 274 to 286; it reads GSAPDIAGKGLAN.

It belongs to the isocitrate and isopropylmalate dehydrogenases family. LeuB type 1 subfamily. Homodimer. Mg(2+) serves as cofactor. Requires Mn(2+) as cofactor.

It is found in the cytoplasm. It carries out the reaction (2R,3S)-3-isopropylmalate + NAD(+) = 4-methyl-2-oxopentanoate + CO2 + NADH. It participates in amino-acid biosynthesis; L-leucine biosynthesis; L-leucine from 3-methyl-2-oxobutanoate: step 3/4. Its function is as follows. Catalyzes the oxidation of 3-carboxy-2-hydroxy-4-methylpentanoate (3-isopropylmalate) to 3-carboxy-4-methyl-2-oxopentanoate. The product decarboxylates to 4-methyl-2 oxopentanoate. The chain is 3-isopropylmalate dehydrogenase (leuB) from Thermus thermophilus (strain ATCC BAA-163 / DSM 7039 / HB27).